The following is a 169-amino-acid chain: S-ribosylhomocysteine lyase (169 aa).

Fe cation-binding residues include H54, H58, and C129.

The protein belongs to the LuxS family. In terms of assembly, homodimer. Fe cation is required as a cofactor.

It catalyses the reaction S-(5-deoxy-D-ribos-5-yl)-L-homocysteine = (S)-4,5-dihydroxypentane-2,3-dione + L-homocysteine. Involved in the synthesis of autoinducer 2 (AI-2) which is secreted by bacteria and is used to communicate both the cell density and the metabolic potential of the environment. The regulation of gene expression in response to changes in cell density is called quorum sensing. Catalyzes the transformation of S-ribosylhomocysteine (RHC) to homocysteine (HC) and 4,5-dihydroxy-2,3-pentadione (DPD). This Actinobacillus pleuropneumoniae serotype 5b (strain L20) protein is S-ribosylhomocysteine lyase.